The primary structure comprises 443 residues: Glutamate-1-semialdehyde 2,1-aminomutase (443 aa).

K281 bears the N6-(pyridoxal phosphate)lysine mark.

Belongs to the class-III pyridoxal-phosphate-dependent aminotransferase family. HemL subfamily. As to quaternary structure, homodimer. The cofactor is pyridoxal 5'-phosphate.

It localises to the cytoplasm. The catalysed reaction is (S)-4-amino-5-oxopentanoate = 5-aminolevulinate. It functions in the pathway porphyrin-containing compound metabolism; protoporphyrin-IX biosynthesis; 5-aminolevulinate from L-glutamyl-tRNA(Glu): step 2/2. In Leptospira interrogans serogroup Icterohaemorrhagiae serovar Lai (strain 56601), this protein is Glutamate-1-semialdehyde 2,1-aminomutase.